The primary structure comprises 317 residues: MTPAPKSTFVLGHRHLLGIEGLSAADISGLLDLSEEYVELNRQVDKKRTSLRGRTQVNLFFEASTRTQSSFEIAGKRLGADVMNMSVSSSSMRKGETLMDTAVTLNAMHPDILVVRHHASGAVELLARKVDGSVINAGDGAHEHPTQALLDALTIRRNKGRLEGLVVAICGDVMHSRVARSNILLLNTMGARVRVVAPSTLLPAGIERMGVEVARDMREGLDGADIVMMLRLQRERMNGSFVPSSAEYFNYFGLDQKKLSYAKPDALVMHPGPMNRGVEIDSIVADGAQSVIREQVEMGVAVRMAVLEALARNLPNA.

Carbamoyl phosphate is bound by residues R66 and T67. K94 serves as a coordination point for L-aspartate. Carbamoyl phosphate-binding residues include R116, H144, and Q147. L-aspartate contacts are provided by R177 and R231. The carbamoyl phosphate site is built by G272 and P273.

This sequence belongs to the aspartate/ornithine carbamoyltransferase superfamily. ATCase family. Heterododecamer (2C3:3R2) of six catalytic PyrB chains organized as two trimers (C3), and six regulatory PyrI chains organized as three dimers (R2).

It catalyses the reaction carbamoyl phosphate + L-aspartate = N-carbamoyl-L-aspartate + phosphate + H(+). It participates in pyrimidine metabolism; UMP biosynthesis via de novo pathway; (S)-dihydroorotate from bicarbonate: step 2/3. Its function is as follows. Catalyzes the condensation of carbamoyl phosphate and aspartate to form carbamoyl aspartate and inorganic phosphate, the committed step in the de novo pyrimidine nucleotide biosynthesis pathway. This is Aspartate carbamoyltransferase catalytic subunit from Rhodopseudomonas palustris (strain ATCC BAA-98 / CGA009).